A 21-amino-acid chain; its full sequence is Magainin-B1 (21 aa).

Expressed by the skin glands.

The protein localises to the secreted. Has no antimicrobial activity against tested bacteria. This is Magainin-B1 from Xenopus borealis (Kenyan clawed frog).